The following is a 460-amino-acid chain: Antizyme inhibitor 2 (460 aa).

The segment at 117–140 is necessary for polyamine uptake stimulation; it reads QIAQIKYAAKHGIQLLSFDNEMEL.

Belongs to the Orn/Lys/Arg decarboxylase class-II family. ODC antizyme inhibitor subfamily. As to quaternary structure, monomer. Interacts with OAZ1, OAZ2 and OAZ3; this interaction disrupts the interaction between the antizyme and ODC1. Does not form a heterodimer with ODC1. Ubiquitinated, leading to its proteasomal degradation; a process that is reduced in presence of antizymes. May also be degraded through the lysosomal degradative pathway in a proteasomal-independent manner. In terms of tissue distribution, expressed in the neocortex, thalamus, hippocampus, cerebellum, medulla oblongata, gray and white matter. Expressed in neurons, oligodendrocytes, basket, Purkinje and pyramidal cells. Expressed in spermatocytes and Leydig cells of the testis. Expressed in luteal theca cells lining corpus luteum cysts and in hilus cells of the ovary. Expressed in primary and neoplastic mast cells (MC) (at protein level). Highly expressed in brain. Also expressed in testis.

The protein resides in the nucleus. Its subcellular location is the cytoplasm. It localises to the perinuclear region. It is found in the membrane. The protein localises to the cytoplasmic vesicle. The protein resides in the endoplasmic reticulum-Golgi intermediate compartment. Its subcellular location is the golgi apparatus. It localises to the cis-Golgi network. It is found in the trans-Golgi network. The protein localises to the cytoplasmic granule. The protein resides in the cell projection. Its subcellular location is the axon. It localises to the dendrite. It is found in the perikaryon. In terms of biological role, antizyme inhibitor (AZI) protein that positively regulates ornithine decarboxylase (ODC) activity and polyamine uptake. AZI is an enzymatically inactive ODC homolog that counteracts the negative effect of ODC antizymes (AZs) OAZ1, OAZ2 and OAZ3 on ODC activity by competing with ODC for antizyme-binding. Inhibits antizyme-dependent ODC degradation and releases ODC monomers from their inactive complex with antizymes, leading to formation of the catalytically active ODC homodimer and restoring polyamine production. Participates in the morphological integrity of the trans-Golgi network (TGN) and functions as a regulator of intracellular secretory vesicle trafficking. This Homo sapiens (Human) protein is Antizyme inhibitor 2 (AZIN2).